The chain runs to 110 residues: Phosphoribosyl-AMP cyclohydrolase (110 aa).

Asp-80 is a binding site for Mg(2+). Position 81 (Cys-81) interacts with Zn(2+). Residues Asp-82 and Asp-84 each coordinate Mg(2+). Positions 97 and 104 each coordinate Zn(2+).

The protein belongs to the PRA-CH family. Homodimer. Requires Mg(2+) as cofactor. Zn(2+) is required as a cofactor.

It is found in the cytoplasm. The enzyme catalyses 1-(5-phospho-beta-D-ribosyl)-5'-AMP + H2O = 1-(5-phospho-beta-D-ribosyl)-5-[(5-phospho-beta-D-ribosylamino)methylideneamino]imidazole-4-carboxamide. It functions in the pathway amino-acid biosynthesis; L-histidine biosynthesis; L-histidine from 5-phospho-alpha-D-ribose 1-diphosphate: step 3/9. Catalyzes the hydrolysis of the adenine ring of phosphoribosyl-AMP. This chain is Phosphoribosyl-AMP cyclohydrolase, found in Clostridium botulinum (strain 657 / Type Ba4).